The primary structure comprises 140 residues: Phosphoribosyl-AMP cyclohydrolase (140 aa).

Asp84 serves as a coordination point for Mg(2+). Zn(2+) is bound at residue Cys85. Asp86 and Asp88 together coordinate Mg(2+). Zn(2+)-binding residues include Cys101 and Cys108.

The protein belongs to the PRA-CH family. As to quaternary structure, homodimer. Mg(2+) is required as a cofactor. Requires Zn(2+) as cofactor.

The protein localises to the cytoplasm. It catalyses the reaction 1-(5-phospho-beta-D-ribosyl)-5'-AMP + H2O = 1-(5-phospho-beta-D-ribosyl)-5-[(5-phospho-beta-D-ribosylamino)methylideneamino]imidazole-4-carboxamide. It participates in amino-acid biosynthesis; L-histidine biosynthesis; L-histidine from 5-phospho-alpha-D-ribose 1-diphosphate: step 3/9. Catalyzes the hydrolysis of the adenine ring of phosphoribosyl-AMP. The polypeptide is Phosphoribosyl-AMP cyclohydrolase (Chloroherpeton thalassium (strain ATCC 35110 / GB-78)).